A 100-amino-acid polypeptide reads, in one-letter code: Large ribosomal subunit protein bL27 (100 aa).

Positions 1 to 13 are excised as a propeptide; it reads MNKLYWLTDLQLF. Positions 18–29 are enriched in basic and acidic residues; the sequence is GVDSSKNGRDSN. The disordered stretch occupies residues 18 to 39; the sequence is GVDSSKNGRDSNPKYLGAKLGD.

It belongs to the bacterial ribosomal protein bL27 family. Post-translationally, the N-terminus is cleaved by ribosomal processing cysteine protease Prp.

This chain is Large ribosomal subunit protein bL27, found in Ureaplasma urealyticum serovar 10 (strain ATCC 33699 / Western).